The primary structure comprises 181 residues: Dual-action ribosomal maturation protein DarP (181 aa).

The interval 1 to 24 (MTGIKRPMSQYQDDNEWEDWGPSK) is disordered.

Belongs to the DarP family.

The protein localises to the cytoplasm. In terms of biological role, member of a network of 50S ribosomal subunit biogenesis factors which assembles along the 30S-50S interface, preventing incorrect 23S rRNA structures from forming. Promotes peptidyl transferase center (PTC) maturation. The sequence is that of Dual-action ribosomal maturation protein DarP from Aeromonas hydrophila subsp. hydrophila (strain ATCC 7966 / DSM 30187 / BCRC 13018 / CCUG 14551 / JCM 1027 / KCTC 2358 / NCIMB 9240 / NCTC 8049).